The sequence spans 97 residues: Putative membrane protein insertion efficiency factor (97 aa).

The protein belongs to the UPF0161 family.

It localises to the cell inner membrane. In terms of biological role, could be involved in insertion of integral membrane proteins into the membrane. This Chlamydia muridarum (strain MoPn / Nigg) protein is Putative membrane protein insertion efficiency factor.